The sequence spans 84 residues: Large ribosomal subunit protein uL23 (84 aa).

It belongs to the universal ribosomal protein uL23 family. In terms of assembly, part of the 50S ribosomal subunit. Contacts protein L29.

In terms of biological role, binds to 23S rRNA. One of the proteins that surrounds the polypeptide exit tunnel on the outside of the ribosome. The polypeptide is Large ribosomal subunit protein uL23 (Thermoplasma acidophilum (strain ATCC 25905 / DSM 1728 / JCM 9062 / NBRC 15155 / AMRC-C165)).